We begin with the raw amino-acid sequence, 336 residues long: Ornithine carbamoyltransferase, catabolic (336 aa).

Carbamoyl phosphate is bound by residues 57 to 60, Gln84, Arg108, and 135 to 138; these read STRT and HPTQ. L-ornithine is bound by residues Asn168, Asp232, and 236–237; that span reads SM. Carbamoyl phosphate-binding positions include 274–275 and Arg321; that span reads CL.

This sequence belongs to the aspartate/ornithine carbamoyltransferase superfamily. OTCase family.

Its subcellular location is the cytoplasm. It catalyses the reaction carbamoyl phosphate + L-ornithine = L-citrulline + phosphate + H(+). It functions in the pathway amino-acid degradation; L-arginine degradation via ADI pathway; carbamoyl phosphate from L-arginine: step 2/2. Reversibly catalyzes the transfer of the carbamoyl group from carbamoyl phosphate (CP) to the N(epsilon) atom of ornithine (ORN) to produce L-citrulline. In Pseudomonas putida (strain ATCC 47054 / DSM 6125 / CFBP 8728 / NCIMB 11950 / KT2440), this protein is Ornithine carbamoyltransferase, catabolic (arcB).